Consider the following 269-residue polypeptide: Tetrahydromethanopterin S-methyltransferase subunit C (269 aa).

The next 8 helical transmembrane spans lie at 18–38 (VLVI…FVPS), 39–59 (LAML…ANTT), 62–82 (VAAY…LGMG), 84–104 (ISAL…ALPF), 106–126 (LVLA…FIVG), 152–172 (ALAI…DLII), 180–200 (IIAL…NACI), and 222–242 (LVFS…VFWI).

This sequence belongs to the MtrC family. In terms of assembly, the complex is composed of 8 subunits; MtrA, MtrB, MtrC, MtrD, MtrE, MtrF, MtrG and MtrH.

It is found in the cell membrane. It catalyses the reaction 5-methyl-5,6,7,8-tetrahydromethanopterin + coenzyme M + 2 Na(+)(in) = 5,6,7,8-tetrahydromethanopterin + methyl-coenzyme M + 2 Na(+)(out). The protein operates within one-carbon metabolism; methanogenesis from CO(2); methyl-coenzyme M from 5,10-methylene-5,6,7,8-tetrahydromethanopterin: step 2/2. In terms of biological role, part of a complex that catalyzes the formation of methyl-coenzyme M and tetrahydromethanopterin from coenzyme M and methyl-tetrahydromethanopterin. This is an energy-conserving, sodium-ion translocating step. The chain is Tetrahydromethanopterin S-methyltransferase subunit C from Methanococcus vannielii (strain ATCC 35089 / DSM 1224 / JCM 13029 / OCM 148 / SB).